Consider the following 416-residue polypeptide: tRNA(Met) cytidine acetate ligase (416 aa).

ATP-binding positions include 7–20, glycine 101, asparagine 163, and arginine 188; that span reads VVEY…HLYH.

Belongs to the TmcAL family.

It localises to the cytoplasm. It carries out the reaction cytidine(34) in elongator tRNA(Met) + acetate + ATP = N(4)-acetylcytidine(34) in elongator tRNA(Met) + AMP + diphosphate. Its function is as follows. Catalyzes the formation of N(4)-acetylcytidine (ac(4)C) at the wobble position of elongator tRNA(Met), using acetate and ATP as substrates. First activates an acetate ion to form acetyladenylate (Ac-AMP) and then transfers the acetyl group to tRNA to form ac(4)C34. This Bacillus licheniformis (strain ATCC 14580 / DSM 13 / JCM 2505 / CCUG 7422 / NBRC 12200 / NCIMB 9375 / NCTC 10341 / NRRL NRS-1264 / Gibson 46) protein is tRNA(Met) cytidine acetate ligase.